The sequence spans 175 residues: ATP-dependent protease subunit HslV (175 aa).

Threonine 2 is an active-site residue. Na(+) contacts are provided by glycine 158, cysteine 161, and threonine 164.

Belongs to the peptidase T1B family. HslV subfamily. A double ring-shaped homohexamer of HslV is capped on each side by a ring-shaped HslU homohexamer. The assembly of the HslU/HslV complex is dependent on binding of ATP.

The protein localises to the cytoplasm. The enzyme catalyses ATP-dependent cleavage of peptide bonds with broad specificity.. Its activity is regulated as follows. Allosterically activated by HslU binding. Protease subunit of a proteasome-like degradation complex believed to be a general protein degrading machinery. This chain is ATP-dependent protease subunit HslV, found in Haemophilus influenzae (strain PittGG).